A 372-amino-acid polypeptide reads, in one-letter code: 4-hydroxy-3-methylbut-2-en-1-yl diphosphate synthase (flavodoxin) (372 aa).

Positions 270, 273, 305, and 312 each coordinate [4Fe-4S] cluster.

Belongs to the IspG family. [4Fe-4S] cluster serves as cofactor.

It catalyses the reaction (2E)-4-hydroxy-3-methylbut-2-enyl diphosphate + oxidized [flavodoxin] + H2O + 2 H(+) = 2-C-methyl-D-erythritol 2,4-cyclic diphosphate + reduced [flavodoxin]. It functions in the pathway isoprenoid biosynthesis; isopentenyl diphosphate biosynthesis via DXP pathway; isopentenyl diphosphate from 1-deoxy-D-xylulose 5-phosphate: step 5/6. Its function is as follows. Converts 2C-methyl-D-erythritol 2,4-cyclodiphosphate (ME-2,4cPP) into 1-hydroxy-2-methyl-2-(E)-butenyl 4-diphosphate. This Shigella boydii serotype 18 (strain CDC 3083-94 / BS512) protein is 4-hydroxy-3-methylbut-2-en-1-yl diphosphate synthase (flavodoxin).